A 224-amino-acid polypeptide reads, in one-letter code: 7-cyano-7-deazaguanine synthase (224 aa).

9-19 (LSGGLDSATVL) serves as a coordination point for ATP. Zn(2+) contacts are provided by C189, C199, C202, and C205.

Belongs to the QueC family. The cofactor is Zn(2+).

The catalysed reaction is 7-carboxy-7-deazaguanine + NH4(+) + ATP = 7-cyano-7-deazaguanine + ADP + phosphate + H2O + H(+). The protein operates within purine metabolism; 7-cyano-7-deazaguanine biosynthesis. Functionally, catalyzes the ATP-dependent conversion of 7-carboxy-7-deazaguanine (CDG) to 7-cyano-7-deazaguanine (preQ(0)). This is 7-cyano-7-deazaguanine synthase from Ralstonia nicotianae (strain ATCC BAA-1114 / GMI1000) (Ralstonia solanacearum).